A 303-amino-acid polypeptide reads, in one-letter code: Phosphatidylglycerol--prolipoprotein diacylglyceryl transferase (303 aa).

A run of 3 helical transmembrane segments spans residues 18 to 38 (LGTL…LIGL), 50 to 70 (INPG…IFGA), and 106 to 126 (IWNG…SIIL). Residue arginine 154 participates in a 1,2-diacyl-sn-glycero-3-phospho-(1'-sn-glycerol) binding. Helical transmembrane passes span 193–213 (PTFL…IFLF), 223–243 (LPSG…RIWI), and 266–286 (IAQL…WWIY).

Belongs to the Lgt family.

Its subcellular location is the cell inner membrane. The catalysed reaction is L-cysteinyl-[prolipoprotein] + a 1,2-diacyl-sn-glycero-3-phospho-(1'-sn-glycerol) = an S-1,2-diacyl-sn-glyceryl-L-cysteinyl-[prolipoprotein] + sn-glycerol 1-phosphate + H(+). The protein operates within protein modification; lipoprotein biosynthesis (diacylglyceryl transfer). Catalyzes the transfer of the diacylglyceryl group from phosphatidylglycerol to the sulfhydryl group of the N-terminal cysteine of a prolipoprotein, the first step in the formation of mature lipoproteins. The sequence is that of Phosphatidylglycerol--prolipoprotein diacylglyceryl transferase from Prochlorococcus marinus (strain SARG / CCMP1375 / SS120).